We begin with the raw amino-acid sequence, 691 residues long: Elongation factor G (691 aa).

Residues 8–282 (ERVRNIGIAA…AVVDYLPAPV (275 aa)) form the tr-type G domain. GTP-binding positions include 17-24 (AHIDAGKT), 81-85 (DTPGH), and 135-138 (NKMD).

Belongs to the TRAFAC class translation factor GTPase superfamily. Classic translation factor GTPase family. EF-G/EF-2 subfamily.

The protein resides in the cytoplasm. Functionally, catalyzes the GTP-dependent ribosomal translocation step during translation elongation. During this step, the ribosome changes from the pre-translocational (PRE) to the post-translocational (POST) state as the newly formed A-site-bound peptidyl-tRNA and P-site-bound deacylated tRNA move to the P and E sites, respectively. Catalyzes the coordinated movement of the two tRNA molecules, the mRNA and conformational changes in the ribosome. The chain is Elongation factor G from Prochlorococcus marinus (strain MIT 9515).